The following is a 250-amino-acid chain: Probable syntaxin-8B (250 aa).

The Cytoplasmic segment spans residues 1-213; sequence MGDYWLNEHD…NRRMETIKQN (213 aa). A coiled-coil region spans residues 73 to 100; sequence EKELLRRKNKVESLISMKNQLNSTLDAA. In terms of domain architecture, t-SNARE coiled-coil homology spans 148–210; the sequence is QHIMREQDES…RNANRRMETI (63 aa). A helical; Anchor for type IV membrane protein transmembrane segment spans residues 214–234; the sequence is AGSTCMIVCIVILIILIVVLI. Residues 235–250 are Vesicular-facing; it reads ATDSGCKIYNDPKHCP.

This sequence belongs to the syntaxin family.

It is found in the membrane. The polypeptide is Probable syntaxin-8B (syn8B) (Dictyostelium discoideum (Social amoeba)).